Reading from the N-terminus, the 595-residue chain is Parathyroid hormone/parathyroid hormone-related peptide receptor (595 aa).

Residues 1-28 (MGAVRIAPGLALLLCCPVLSSAYALVDA) form the signal peptide. Over 29-188 (DDVMTKEEQI…REREVFDRLG (160 aa)) the chain is Extracellular. 3 cysteine pairs are disulfide-bonded: Cys-48/Cys-117, Cys-108/Cys-148, and Cys-131/Cys-170. Residues 66–103 (DKGWASASTSGKPKKEKASGKLYPESEEDKEVPTGSRH) are disordered. Asn-151, Asn-161, Asn-166, and Asn-176 each carry an N-linked (GlcNAc...) asparagine glycan. The helical transmembrane segment at 189–209 (MIYTVGYSVSLASLTVAVLIL) threads the bilayer. At 210–223 (AYFRRLHCTRNYIH) the chain is on the cytoplasmic side. The chain crosses the membrane as a helical span at residues 224–244 (MHLFLSFMLRAVSIFVKDAVL). At 245 to 294 (YSGATLDEAERLTEEELRAIAQAPPPPTAAAGYAGCRVAVTFFLYFLATN) the chain is on the extracellular side. Residues 295–315 (YYWILVEGLYLHSLIFMAFFS) form a helical membrane-spanning segment. At 316-318 (EKK) the chain is on the cytoplasmic side. A helical membrane pass occupies residues 319-339 (YLWGFTVFGWGLPAVFVAVWV). Residues 340-360 (SVRATLANTGCWDLSSGNKKW) are Extracellular-facing. The helical transmembrane segment at 361-381 (IIQVPILASIVLNFILFINIV) threads the bilayer. Over 382-404 (RVLATKLRETNAGRCDTRQQYRK) the chain is Cytoplasmic. The helical transmembrane segment at 405-425 (LLKSTLVLMPLFGVHYIVFMA) threads the bilayer. The Extracellular portion of the chain corresponds to 426-439 (TPYTEVSGTLWQVQ). The helical transmembrane segment at 440-460 (MHYEMLFNSFQGFFVAIIYCF) threads the bilayer. Residues 461–595 (CNGEVQAEIK…LLQEEWETVM (135 aa)) lie on the Cytoplasmic side of the membrane. An Important for interaction with G proteins motif is present at residues 473 to 476 (WSRW). Residues 528-595 (TTTATTNGHP…LLQEEWETVM (68 aa)) are disordered. Low complexity predominate over residues 547–559 (APTLPATPPATAA). Residue Thr-553 is modified to Phosphothreonine.

This sequence belongs to the G-protein coupled receptor 2 family. Homodimer in the absence of bound ligand. Peptide hormone binding leads to dissociation of the homodimer. Post-translationally, N-glycosylated. In terms of tissue distribution, high levels in the kidney, with much lower levels in aorta, heart, lung, prostate, testis, and skeletal muscle.

It is found in the cell membrane. Functionally, G-protein-coupled receptor for parathyroid hormone (PTH) and for parathyroid hormone-related peptide (PTHLH). Ligand binding causes a conformation change that triggers signaling via guanine nucleotide-binding proteins (G proteins) and modulates the activity of downstream effectors, such as adenylate cyclase (cAMP). PTH1R is coupled to G(s) G alpha proteins and mediates activation of adenylate cyclase activity. PTHLH dissociates from PTH1R more rapidly than PTH; as consequence, the cAMP response induced by PTHLH decays faster than the response induced by PTH. In Canis lupus familiaris (Dog), this protein is Parathyroid hormone/parathyroid hormone-related peptide receptor (PTH1R).